A 176-amino-acid chain; its full sequence is Ribosome maturation factor RimM (176 aa).

Residues 97-176 enclose the PRC barrel domain; the sequence is EDEFYWRDLI…QILVDWDPDF (80 aa).

The protein belongs to the RimM family. In terms of assembly, binds ribosomal protein uS19.

Its subcellular location is the cytoplasm. An accessory protein needed during the final step in the assembly of 30S ribosomal subunit, possibly for assembly of the head region. Essential for efficient processing of 16S rRNA. May be needed both before and after RbfA during the maturation of 16S rRNA. It has affinity for free ribosomal 30S subunits but not for 70S ribosomes. This Shewanella putrefaciens (strain CN-32 / ATCC BAA-453) protein is Ribosome maturation factor RimM.